The following is a 215-amino-acid chain: Elongation factor Ts (215 aa).

The involved in Mg(2+) ion dislocation from EF-Tu stretch occupies residues Thr80–Val83.

It belongs to the EF-Ts family.

It localises to the cytoplasm. Associates with the EF-Tu.GDP complex and induces the exchange of GDP to GTP. It remains bound to the aminoacyl-tRNA.EF-Tu.GTP complex up to the GTP hydrolysis stage on the ribosome. This is Elongation factor Ts from Alkaliphilus metalliredigens (strain QYMF).